Here is a 626-residue protein sequence, read N- to C-terminus: Ankyrin repeat domain-containing protein 55 (626 aa).

ANK repeat units follow at residues 25-54 (VDLA…SILE), 59-88 (EGCT…NINT), 92-124 (YGRT…IPDK), 125-156 (NGRL…EINH), 160-189 (EGMT…DPTL), 193-222 (DFKT…GPSI), 229-259 (SGKT…NLQA), 263-292 (DDRT…DSNL), and 296-325 (NEST…AEPA). Positions 354-372 (KEEQKAHQKDQSRARPKEE) are enriched in basic and acidic residues. Disordered regions lie at residues 354 to 377 (KEEQ…TSEV), 455 to 491 (HAGL…SLEN), and 522 to 626 (QPGH…HDEN). Ser474 is modified (phosphoserine). The segment covering 604–614 (QRGHDPPRAEE) has biased composition (basic and acidic residues). Residues 616-626 (GGSSSPTHDEN) are compositionally biased toward polar residues.

The chain is Ankyrin repeat domain-containing protein 55 (Ankrd55) from Mus musculus (Mouse).